The chain runs to 266 residues: Segregation and condensation protein A (266 aa).

This sequence belongs to the ScpA family. As to quaternary structure, component of a cohesin-like complex composed of ScpA, ScpB and the Smc homodimer, in which ScpA and ScpB bind to the head domain of Smc. The presence of the three proteins is required for the association of the complex with DNA.

The protein localises to the cytoplasm. Functionally, participates in chromosomal partition during cell division. May act via the formation of a condensin-like complex containing Smc and ScpB that pull DNA away from mid-cell into both cell halves. This Coxiella burnetii (strain RSA 493 / Nine Mile phase I) protein is Segregation and condensation protein A.